Consider the following 295-residue polypeptide: Ribosomal RNA small subunit methyltransferase A (295 aa).

The S-adenosyl-L-methionine site is built by N29, L31, G56, E77, D102, and N128.

It belongs to the class I-like SAM-binding methyltransferase superfamily. rRNA adenine N(6)-methyltransferase family. RsmA subfamily.

The protein localises to the cytoplasm. The enzyme catalyses adenosine(1518)/adenosine(1519) in 16S rRNA + 4 S-adenosyl-L-methionine = N(6)-dimethyladenosine(1518)/N(6)-dimethyladenosine(1519) in 16S rRNA + 4 S-adenosyl-L-homocysteine + 4 H(+). Its function is as follows. Specifically dimethylates two adjacent adenosines (A1518 and A1519) in the loop of a conserved hairpin near the 3'-end of 16S rRNA in the 30S particle. May play a critical role in biogenesis of 30S subunits. This is Ribosomal RNA small subunit methyltransferase A from Listeria monocytogenes serotype 4b (strain CLIP80459).